We begin with the raw amino-acid sequence, 927 residues long: DNA polymerase alpha-binding protein (927 aa).

WD repeat units lie at residues Phe10–Glu49, Lys134–Val173, Ala227–Thr266, and Ser273–Thr313. Ser377, Ser379, and Ser398 each carry phosphoserine. 2 positions are modified to phosphothreonine: Thr401 and Thr411. Phosphoserine is present on Ser463. One copy of the WD 5 repeat lies at Gly699–Asp739.

Its subcellular location is the nucleus. Accessory factor for DNA replication. It plays a role in accurately duplicating the genome in vivo. The polypeptide is DNA polymerase alpha-binding protein (CTF4) (Saccharomyces cerevisiae (strain ATCC 204508 / S288c) (Baker's yeast)).